The following is a 296-amino-acid chain: Cytidine deaminase (296 aa).

2 consecutive CMP/dCMP-type deaminase domains span residues 47 to 167 (ELNE…FGPS) and 186 to 296 (DSND…VEPE). Residue 88 to 90 (NIE) coordinates substrate. Histidine 101 contacts Zn(2+). Catalysis depends on glutamate 103, which acts as the Proton donor. The Zn(2+) site is built by cysteine 128 and cysteine 131.

It belongs to the cytidine and deoxycytidylate deaminase family. Homodimer. Zn(2+) serves as cofactor.

The enzyme catalyses cytidine + H2O + H(+) = uridine + NH4(+). It catalyses the reaction 2'-deoxycytidine + H2O + H(+) = 2'-deoxyuridine + NH4(+). Functionally, this enzyme scavenges exogenous and endogenous cytidine and 2'-deoxycytidine for UMP synthesis. In Shewanella pealeana (strain ATCC 700345 / ANG-SQ1), this protein is Cytidine deaminase.